The primary structure comprises 444 residues: C4-dicarboxylate transport protein 3 (444 aa).

Transmembrane regions (helical) follow at residues 22–42 (VLYV…WLWP), 60–80 (LIKM…IAHI), 95–115 (VYFE…GNLV), 162–182 (GEIL…MSLG), 198–218 (AVFG…FGAM), 236–256 (LIAT…GIIA), 321–341 (IYMT…LSFG), 346–366 (ILVV…AGFI), and 399–419 (LTNL…EGEL).

It belongs to the dicarboxylate/amino acid:cation symporter (DAACS) (TC 2.A.23) family.

It localises to the cell inner membrane. Its function is as follows. Responsible for the transport of dicarboxylates such as succinate, fumarate, and malate from the periplasm across the membrane. The chain is C4-dicarboxylate transport protein 3 from Bradyrhizobium diazoefficiens (strain JCM 10833 / BCRC 13528 / IAM 13628 / NBRC 14792 / USDA 110).